A 568-amino-acid chain; its full sequence is Proton-coupled zinc antiporter SLC30A9, mitochondrial (568 aa).

The transit peptide at 1 to 67 directs the protein to the mitochondrion; sequence MLPGLAAAAA…IGTLSQVKLY (67 aa). The next 5 membrane-spanning stretches (helical) occupy residues 239–259, 314–334, 342–362, 392–412, and 424–444; these read VVMV…LAWI, GVGI…MGLL, LLWA…TLLV, VILL…TCMG, and SLGS…LIYT. The short motif at 462–466 is the LXXLL motif element; it reads LTELL.

This sequence belongs to the cation diffusion facilitator (CDF) transporter (TC 2.A.4) family. SLC30A subfamily. As to quaternary structure, interacts with GRIP1, ESR1 and AR. As to expression, ubiquitously expressed in fetal and adult tissues and cancer cell lines.

The protein localises to the mitochondrion membrane. It localises to the nucleus. It is found in the endoplasmic reticulum. It catalyses the reaction Zn(2+)(in) + 2 H(+)(out) = Zn(2+)(out) + 2 H(+)(in). In terms of biological role, mitochondrial proton-coupled zinc ion antiporter mediating the export of zinc from the mitochondria and involved in zinc homeostasis, zinc mobilization as well as mitochondrial morphology and health. In nucleus, functions as a secondary coactivator for nuclear receptors by cooperating with p160 coactivators subtypes. Plays a role in transcriptional activation of Wnt-responsive genes. This Homo sapiens (Human) protein is Proton-coupled zinc antiporter SLC30A9, mitochondrial.